We begin with the raw amino-acid sequence, 414 residues long: Probable protein phosphatase 2C 80 (414 aa).

In terms of domain architecture, PPM-type phosphatase spans 174 to 411; it reads SCYLPHPEKE…DDITAVVSYV (238 aa). The Mn(2+) site is built by Asp204, Gly205, Asp336, and Asp402.

It belongs to the PP2C family. It depends on Mg(2+) as a cofactor. Mn(2+) is required as a cofactor.

It catalyses the reaction O-phospho-L-seryl-[protein] + H2O = L-seryl-[protein] + phosphate. The enzyme catalyses O-phospho-L-threonyl-[protein] + H2O = L-threonyl-[protein] + phosphate. The polypeptide is Probable protein phosphatase 2C 80 (Arabidopsis thaliana (Mouse-ear cress)).